The chain runs to 277 residues: Ribosomal RNA small subunit methyltransferase I (277 aa).

Belongs to the methyltransferase superfamily. RsmI family.

Its subcellular location is the cytoplasm. It catalyses the reaction cytidine(1402) in 16S rRNA + S-adenosyl-L-methionine = 2'-O-methylcytidine(1402) in 16S rRNA + S-adenosyl-L-homocysteine + H(+). Its function is as follows. Catalyzes the 2'-O-methylation of the ribose of cytidine 1402 (C1402) in 16S rRNA. This chain is Ribosomal RNA small subunit methyltransferase I, found in Mycoplasma genitalium (strain ATCC 33530 / DSM 19775 / NCTC 10195 / G37) (Mycoplasmoides genitalium).